The sequence spans 259 residues: Thiazole synthase (259 aa).

Residue Lys-100 is the Schiff-base intermediate with DXP of the active site. Residues Gly-161, 187 to 188 (AG), and 209 to 210 (AS) contribute to the 1-deoxy-D-xylulose 5-phosphate site.

It belongs to the ThiG family. Homotetramer. Forms heterodimers with either ThiH or ThiS.

The protein resides in the cytoplasm. It catalyses the reaction [ThiS sulfur-carrier protein]-C-terminal-Gly-aminoethanethioate + 2-iminoacetate + 1-deoxy-D-xylulose 5-phosphate = [ThiS sulfur-carrier protein]-C-terminal Gly-Gly + 2-[(2R,5Z)-2-carboxy-4-methylthiazol-5(2H)-ylidene]ethyl phosphate + 2 H2O + H(+). The protein operates within cofactor biosynthesis; thiamine diphosphate biosynthesis. Its function is as follows. Catalyzes the rearrangement of 1-deoxy-D-xylulose 5-phosphate (DXP) to produce the thiazole phosphate moiety of thiamine. Sulfur is provided by the thiocarboxylate moiety of the carrier protein ThiS. In vitro, sulfur can be provided by H(2)S. In Salinispora arenicola (strain CNS-205), this protein is Thiazole synthase.